The sequence spans 482 residues: Variant surface glycoprotein ANTAT 1.1C (482 aa).

The first 8 residues, 1–8 (LHPQQALA), serve as a signal peptide directing secretion. 2 disulfides stabilise this stretch: cysteine 24-cysteine 151 and cysteine 133-cysteine 188. N-linked (GlcNAc...) asparagine glycosylation is present at asparagine 92. Asparagine 398 and asparagine 411 each carry an N-linked (GlcNAc...) asparagine glycan. Aspartate 459 is lipidated: GPI-anchor amidated aspartate. Positions 460–482 (SSILVTKKFALSLVSAAFASLLF) are cleaved as a propeptide — removed in mature form.

It is found in the cell membrane. Functionally, VSG forms a coat on the surface of the parasite. The trypanosome evades the immune response of the host by expressing a series of antigenically distinct VSGs from an estimated 1000 VSG genes. The protein is Variant surface glycoprotein ANTAT 1.1C of Trypanosoma brucei brucei.